Consider the following 569-residue polypeptide: Glutamate--tRNA ligase (569 aa).

Positions 99-109 (PEPNGYPTLGH) match the 'HIGH' region motif.

This sequence belongs to the class-I aminoacyl-tRNA synthetase family. Glutamate--tRNA ligase type 2 subfamily.

Its subcellular location is the cytoplasm. The catalysed reaction is tRNA(Glu) + L-glutamate + ATP = L-glutamyl-tRNA(Glu) + AMP + diphosphate. Catalyzes the attachment of glutamate to tRNA(Glu) in a two-step reaction: glutamate is first activated by ATP to form Glu-AMP and then transferred to the acceptor end of tRNA(Glu). The sequence is that of Glutamate--tRNA ligase from Korarchaeum cryptofilum (strain OPF8).